The primary structure comprises 38 residues: Beta-defensin 8 (38 aa).

Cystine bridges form between Cys7–Cys36, Cys14–Cys29, and Cys19–Cys37.

Belongs to the beta-defensin family. Neutrophilic granules.

It is found in the secreted. In terms of biological role, has bactericidal activity. Active against E.coli ML35 and S.aureus 502A. In Bos taurus (Bovine), this protein is Beta-defensin 8 (DEFB8).